Reading from the N-terminus, the 693-residue chain is Putative adenosylcobalamin-dependent ribonucleoside-triphosphate reductase (693 aa).

A disulfide bridge links Cys-90 with Cys-386. Catalysis depends on residues Cys-375 and Glu-377.

It belongs to the class II ribonucleoside-triphosphate reductase family. The cofactor is adenosylcob(III)alamin.

The enzyme catalyses a 2'-deoxyribonucleoside 5'-triphosphate + [thioredoxin]-disulfide + H2O = a ribonucleoside 5'-triphosphate + [thioredoxin]-dithiol. This is Putative adenosylcobalamin-dependent ribonucleoside-triphosphate reductase (50) from Mycobacterium phage D29 (Mycobacteriophage D29).